We begin with the raw amino-acid sequence, 856 residues long: Leucine--tRNA ligase (856 aa).

The 'HIGH' region signature appears at 42-52; that stretch reads PYPSGNLHMGH. The 'KMSKS' region signature appears at 617-621; the sequence is KMSKS. Residue lysine 620 participates in ATP binding.

Belongs to the class-I aminoacyl-tRNA synthetase family.

It is found in the cytoplasm. The catalysed reaction is tRNA(Leu) + L-leucine + ATP = L-leucyl-tRNA(Leu) + AMP + diphosphate. The polypeptide is Leucine--tRNA ligase (Rippkaea orientalis (strain PCC 8801 / RF-1) (Cyanothece sp. (strain PCC 8801))).